Reading from the N-terminus, the 515-residue chain is Leucine-rich repeat transmembrane neuronal protein 2 (515 aa).

Positions 1–33 are cleaved as a signal peptide; that stretch reads MGLHFKWPLGAPMLAAIYAMSVVLKMLPALGMA. Residues 34–421 lie on the Extracellular side of the membrane; that stretch reads CPPKCRCEKL…EPDNAIFTQR (388 aa). An N-linked (GlcNAc...) asparagine glycan is attached at asparagine 57. 10 LRR repeats span residues 61-83, 84-107, 109-131, 132-155, 156-179, 181-203, 205-227, 229-251, 252-275, and 276-299; these read KGSLGLSLRHNHITALERDQFAS, FSQLTWLHLDHNQISTVKEDAFQG, YKLKELILSSNKIFYLPNTTFTQ, LINLQNLDLSFNQLSSLHPELFYG, LRKLQTLHLRSNSLRTIPVRLFWD, RSLEFLDLSTNRLRSLARNGFAG, IKLRELHLEHNQLTKINFAHFLR, SSLHTLFLQWNKISNLTCGMEWT, WSTLEKLDLTGNEIKAIDLTVFET, and MPNLKILLMDNNKLNSLDSKILSS. The N-linked (GlcNAc...) asparagine glycan is linked to asparagine 126. Asparagine 243 carries an N-linked (GlcNAc...) asparagine glycan. N-linked (GlcNAc...) asparagine glycosylation is present at asparagine 362. Residues 422-442 form a helical membrane-spanning segment; that stretch reads VITGTMALLFSFFFIIFIVFI. The Cytoplasmic segment spans residues 443 to 515; sequence SRKCCPPTLR…QQLPYKECEV (73 aa). The Involved in DLG4-binding signature appears at 512–515; that stretch reads ECEV.

Belongs to the LRRTM family. As to quaternary structure, interacts with DLG4. Interacts with neurexin NRXN1; interaction is mediated by heparan sulfate glycan modification on neurexin. As to expression, expressed in neuronal tissues. Widely distributed in neuropil regions in discrete puncta throughout the brain (at protein level). Detected in cortex, thalamus, striatum, olfactory bulb, cerebellum and all hippocampal subfields (at protein level). More abundant in deep than in superficial layers of neocortex (at protein level).

The protein localises to the cell membrane. Its subcellular location is the postsynaptic cell membrane. Functionally, involved in the development and maintenance of excitatory synapses in the nervous system. Regulates surface expression of AMPA receptors and instructs the development of functional glutamate release sites. Acts as a ligand for the presynaptic receptors NRXN1-A and NRXN1-B. The chain is Leucine-rich repeat transmembrane neuronal protein 2 (Lrrtm2) from Rattus norvegicus (Rat).